The sequence spans 114 residues: MSKKMFGEIMRQAQKIQEEIQKKQEEVKKMTVEATSGGGMVTVQANGAGEIVSIKIDREVVNPDDIEMLEDLVLAAVNEAIKRAHELAQSEMAKVSMPFNLPGMPDLSSLFGKL.

It belongs to the YbaB/EbfC family. In terms of assembly, homodimer.

It is found in the cytoplasm. It localises to the nucleoid. Its function is as follows. Binds to DNA and alters its conformation. May be involved in regulation of gene expression, nucleoid organization and DNA protection. This is Nucleoid-associated protein THEYE_A1069 from Thermodesulfovibrio yellowstonii (strain ATCC 51303 / DSM 11347 / YP87).